A 91-amino-acid chain; its full sequence is Ragulator complex protein LAMTOR5 homolog (91 aa).

It belongs to the LAMTOR5 family. Part of the Ragulator complex.

It is found in the cytoplasm. It localises to the lysosome. Regulator of the TOR pathway, a signaling cascade that promotes cell growth in response to growth factors, energy levels, and amino acids. As part of the Ragulator complex, may activate the TOR signaling cascade in response to amino acids. The chain is Ragulator complex protein LAMTOR5 homolog from Nematostella vectensis (Starlet sea anemone).